The primary structure comprises 331 residues: Phosphoribosylformylglycinamidine cyclo-ligase (331 aa).

Belongs to the AIR synthase family.

It localises to the cytoplasm. It carries out the reaction 2-formamido-N(1)-(5-O-phospho-beta-D-ribosyl)acetamidine + ATP = 5-amino-1-(5-phospho-beta-D-ribosyl)imidazole + ADP + phosphate + H(+). Its pathway is purine metabolism; IMP biosynthesis via de novo pathway; 5-amino-1-(5-phospho-D-ribosyl)imidazole from N(2)-formyl-N(1)-(5-phospho-D-ribosyl)glycinamide: step 2/2. This chain is Phosphoribosylformylglycinamidine cyclo-ligase, found in Clostridium botulinum (strain Langeland / NCTC 10281 / Type F).